The following is a 110-amino-acid chain: MEARAKLSFARLSPRKTRLVVDMVRGRGIQDALTILRFSPQPSAKLVSKLLQSAVANAEQKGASDVDRLFVKTIFVDAGPVLKRFTPRAMGRASKIRKPTSHVTVVLADK.

The protein belongs to the universal ribosomal protein uL22 family. In terms of assembly, part of the 50S ribosomal subunit.

This protein binds specifically to 23S rRNA; its binding is stimulated by other ribosomal proteins, e.g. L4, L17, and L20. It is important during the early stages of 50S assembly. It makes multiple contacts with different domains of the 23S rRNA in the assembled 50S subunit and ribosome. In terms of biological role, the globular domain of the protein is located near the polypeptide exit tunnel on the outside of the subunit, while an extended beta-hairpin is found that lines the wall of the exit tunnel in the center of the 70S ribosome. The chain is Large ribosomal subunit protein uL22 from Geobacter metallireducens (strain ATCC 53774 / DSM 7210 / GS-15).